The sequence spans 1627 residues: Pappalysin-1 (1627 aa).

An N-terminal signal peptide occupies residues 1-22 (MRLWSWVLHLGLLSAALGCGLA). Positions 23 to 81 (ERPRRARRDPRAGRPPRPAAGPATCATRAARGRRASPPPPPPPGGAWEAVRVPRRRQQR) are excised as a propeptide. A disordered region spans residues 23–99 (ERPRRARRDP…PSPPSRALYF (77 aa)). Residues 42-51 (AGPATCATRA) show a composition bias toward low complexity. Cystine bridges form between C144–C235, C327–C622, C332–C657, C414–C428, C424–C440, C457–C473, C474–C485, C583–C600, C587–C612, C710–C878, C713–C881, C753–C835, C775–C781, C947–C975, C960–C971, C983–C990, and C999–C1011. The interval 272-583 (METHGAHTAL…FRGISEIQSC (312 aa)) is metalloprotease. Residues N390 and N402 are each glycosylated (N-linked (GlcNAc...) asparagine). N429 is a glycosylation site (N-linked (GlcNAc...) asparagine). A glycan (N-linked (GlcNAc...) asparagine) is linked at N480. H562 contributes to the Zn(2+) binding site. The active site involves E563. 2 residues coordinate Zn(2+): H566 and H572. 3 N-linked (GlcNAc...) asparagine glycosylation sites follow: N601, N619, and N725. The tract at residues 733 to 754 (SPSGHWSPREAEGHPDVEQPCK) is disordered. The span at 739-751 (SPREAEGHPDVEQ) shows a compositional bias: basic and acidic residues. N825 carries N-linked (GlcNAc...) asparagine glycosylation. A glycan (N-linked (GlcNAc...) asparagine) is linked at N1026. 19 disulfide bridges follow: C1036/C1070, C1051/C1139, C1192/C1205, C1215/C1269, C1227/C1238, C1242/C1280, C1285/C1329, C1300/C1310, C1314/C1342, C1346/C1399, C1362/C1373, C1377/C1410, C1415/C1458, C1428/C1438, C1442/C1471, C1478/C1539, C1492/C1502, C1506/C1554, and C1558/C1576. 5 Sushi domains span residues 1213–1282 (TDCP…ACEP), 1283–1344 (VDCS…LCEL), 1345–1412 (MCLA…ACVP), 1413–1473 (VTCD…VCQE), and 1476–1556 (GQCS…HCVK). 2 N-linked (GlcNAc...) asparagine glycosylation sites follow: N1222 and N1226. N1323 is a glycosylation site (N-linked (GlcNAc...) asparagine). N-linked (GlcNAc...) asparagine glycosylation occurs at N1465. N1519 is a glycosylation site (N-linked (GlcNAc...) asparagine).

It belongs to the peptidase M43B family. Homodimer; disulfide-linked. In pregnancy serum, predominantly found as a disulfide-linked 2:2 heterotetramer with the proform of PRG2. The cofactor is Zn(2+). Post-translationally, there appear to be no free sulfhydryl groups. High levels in placenta and pregnancy serum. In placenta, expressed in X cells in septa and anchoring villi, and in syncytiotrophoblasts in the chorionic villi. Lower levels are found in a variety of other tissues including kidney, myometrium, endometrium, ovaries, breast, prostate, bone marrow, colon, fibroblasts and osteoblasts.

It localises to the secreted. It catalyses the reaction Cleavage of the 135-Met-|-Lys-136 bond in insulin-like growth factor binding protein (IGFBP)-4, and the 143-Ser-|-Lys-144 bond in IGFBP-5.. Its activity is regulated as follows. Inhibited by complexation with the proform of PRG2. Functionally, metalloproteinase which specifically cleaves IGFBP-4 and IGFBP-5, resulting in release of bound IGF. Cleavage of IGFBP-4 is dramatically enhanced by the presence of IGF, whereas cleavage of IGFBP-5 is slightly inhibited by the presence of IGF. In Homo sapiens (Human), this protein is Pappalysin-1 (PAPPA).